The sequence spans 625 residues: MDQKAIVLDNSKSGSKQTKSSGKMQTQTDTNAEVLNTDNSIKKETGSDSEDLFNKFSNKKTNRKIPNIAEELAKNRNYVKGASPSPIIISGSSSTSPSGPSSSSTNPMGIPTNRFNKNTVELYQHSPSPVMTTNKTDTEEKRQNNRNMDNKNTPERGSSSFAAKQLKISSLLTISSNEDSKTLHINDTNGNKNSNAASNNIPSAYAELHTEGNSIESLIKPPSSPRNKSLTPKVILPTQNMDGTIAKDPHLGDNTPGILIAKTSSPVNLDVESTAQSLGKFNKSTNSLKAALTKAPAEKVSLKRSISSVTNSDSNISSSKKPTSEKAKKSSSASAILPKPTTTKTSKKAASNSSDSTRKKNASNKTTSAIKKESNAGSKLNTVKKENSSLSSIKATEKEKDKGGNSTEAKNSTSNVRKEPTAKSPKRLVAAPTVSPPKILQTAETKAKEPSILIDVPLYQADTNDYLDENGQVIFNLSTLIKEKYHPKSKELAQLKDSKRNLLMQLSDHSNGSLEKEKDEEGDVIELDDDEDMEEDEGEIDTETNTVTTTISPKKKSHPMKGKNLIGKYDVEDPFIDDSELLWEEQRAATKDGFFVYFGPLIEKGHYASLERANGTMKRGGVKNK.

Disordered regions lie at residues 1 to 164 and 295 to 437; these read MDQK…FAAK and APAE…VSPP. The span at 11–28 shows a compositional bias: low complexity; it reads SKSGSKQTKSSGKMQTQT. Positions 29 to 39 are enriched in polar residues; the sequence is DTNAEVLNTDN. Phosphoserine occurs at positions 47 and 49. Over residues 83–105 the composition is skewed to low complexity; sequence SPSPIIISGSSSTSPSGPSSSST. A compositionally biased stretch (polar residues) spans 113–135; it reads NRFNKNTVELYQHSPSPVMTTNK. Basic and acidic residues predominate over residues 136–154; it reads TDTEEKRQNNRNMDNKNTP. The segment covering 155-164 has biased composition (polar residues); that stretch reads ERGSSSFAAK. Composition is skewed to low complexity over residues 305-321 and 330-355; these read SISS…SSKK and SSSA…NSSD. Composition is skewed to polar residues over residues 363–381 and 404–415; these read SNKT…SKLN and GNSTEAKNSTSN. S435 carries the phosphoserine modification.

The protein belongs to the HPC2 family. In terms of assembly, component of the HIR complex, composed of HIR1, HIR2, HIR3 and HPC2. This complex may consist of one copy of HIR1 and HIR3 and two copies of HIR2 and HPC2. The HIR complex interacts with ASF1. Interacts with RTT106.

It is found in the nucleus. Its subcellular location is the chromosome. In terms of biological role, component of the HIR complex, which functions as a histone chaperone that cooperates with ASF1 to promote replication-independent chromatin assembly. The HIR complex is also required for the periodic repression of three of the four histone gene loci during cell cycle as well as for autogenous regulation of the HTA1-HTB1 locus by H2A and H2B. DNA-binding by the HIR complex may repress transcription by inhibiting nucleosome remodeling by the SWI/SNF complex. The HIR complex may also be required for transcriptional silencing of centromeric, telomeric and mating-type loci in the absence of CAF-1. The polypeptide is Histone promoter control protein 2 (HPC2) (Saccharomyces cerevisiae (strain ATCC 204508 / S288c) (Baker's yeast)).